Consider the following 195-residue polypeptide: MSHVWGLFSHPDREMQVINRENETISHHYTHHVLLMAAIPVICAFIGTTQIGWNFGDGTILKLSWFTGLALAVLFYGVMLAGVAVMGRVIWWMARNYPQRPSLAHCMVFAGYVATPLFLSGLVALYPLVWLCALVGTVALFYTGYLLYLGIPSFLNINKEEGLSFSSSTLAIGVLVLEVLLALTVILWGYGYRLF.

Residues 1-32 are Cytoplasmic-facing; sequence MSHVWGLFSHPDREMQVINRENETISHHYTHH. Residues 33 to 55 traverse the membrane as a helical segment; the sequence is VLLMAAIPVICAFIGTTQIGWNF. The Periplasmic segment spans residues 56 to 64; sequence GDGTILKLS. A helical transmembrane segment spans residues 65 to 87; that stretch reads WFTGLALAVLFYGVMLAGVAVMG. Residues 88-107 are Cytoplasmic-facing; that stretch reads RVIWWMARNYPQRPSLAHCM. A helical membrane pass occupies residues 108-130; the sequence is VFAGYVATPLFLSGLVALYPLVW. The Periplasmic portion of the chain corresponds to 131–134; it reads LCAL. The chain crosses the membrane as a helical span at residues 135 to 157; the sequence is VGTVALFYTGYLLYLGIPSFLNI. The Cytoplasmic segment spans residues 158–169; it reads NKEEGLSFSSST. The chain crosses the membrane as a helical span at residues 170–192; sequence LAIGVLVLEVLLALTVILWGYGY. Residues 193–195 are Periplasmic-facing; the sequence is RLF.

The protein resides in the cell inner membrane. The sequence is that of Inner membrane protein YohC (yohC) from Escherichia coli O6:H1 (strain CFT073 / ATCC 700928 / UPEC).